Here is a 191-residue protein sequence, read N- to C-terminus: MPDARPPCSILILAGGRGQRMGGRDKGLVDWRGEPLIAHVHRVVRPLSDDLVISCNRNQADYRAYADRLVGDAEADFPGPLAGVIAGLKVARHGWVVVLACDAPLVDRELIEGLLRLAVAGNSAAMVRQGGFWQPMFSVLPKRVLPALEQAWAAGERSLQKALLREAVQGLECAESDRRLSNFNSPERLQD.

GTP contacts are provided by residues 13 to 15 (LAG), Lys26, Asp72, and Asp102. Mg(2+) is bound at residue Asp102.

Belongs to the MobA family. In terms of assembly, monomer. Mg(2+) is required as a cofactor.

The protein localises to the cytoplasm. It carries out the reaction Mo-molybdopterin + GTP + H(+) = Mo-molybdopterin guanine dinucleotide + diphosphate. In terms of biological role, transfers a GMP moiety from GTP to Mo-molybdopterin (Mo-MPT) cofactor (Moco or molybdenum cofactor) to form Mo-molybdopterin guanine dinucleotide (Mo-MGD) cofactor. The chain is Molybdenum cofactor guanylyltransferase from Pseudomonas putida (strain ATCC 700007 / DSM 6899 / JCM 31910 / BCRC 17059 / LMG 24140 / F1).